Reading from the N-terminus, the 138-residue chain is Histone H3 (138 aa).

A disordered region spans residues 1 to 49; sequence MARTKQTARKSTGGKAPRKQLATKAARKQAPSQVSGGVKKPHRYRPGTV. An N6,N6,N6-trimethyllysine; alternate modification is found at Lys-5. Position 5 is an N6,N6-dimethyllysine; alternate (Lys-5). N6-methyllysine; alternate is present on residues Lys-5 and Lys-10. Position 10 is an N6-acetyllysine; alternate (Lys-10). Ser-11 carries the post-translational modification Phosphoserine. Lys-15 carries the post-translational modification N6,N6-dimethyllysine; alternate. N6-methyllysine; alternate occurs at positions 15, 19, 24, 28, and 39. Lys-15, Lys-19, Lys-24, Lys-28, and Lys-39 each carry N6-acetyllysine; alternate. N6,N6,N6-trimethyllysine; alternate occurs at positions 28 and 39. N6,N6-dimethyllysine; alternate is present on residues Lys-28 and Lys-39. N6-acetyllysine occurs at positions 59 and 67. Position 82 is an N6,N6,N6-trimethyllysine; alternate (Lys-82). Lys-82 is subject to N6,N6-dimethyllysine; alternate. Residue Lys-82 is modified to N6-methyllysine; alternate.

Belongs to the histone H3 family. The nucleosome is a histone octamer containing two molecules each of H2A, H2B, H3 and H4 assembled in one H3-H4 heterotetramer and two H2A-H2B heterodimers. The octamer wraps approximately 147 bp of DNA. In terms of processing, phosphorylated to form H3S10ph. H3S10ph promotes subsequent H3K14ac formation and is required for transcriptional activation through TBP recruitment to the promoters. Mono-, di- and trimethylated by the COMPASS complex to form H3K4me1/2/3. H3K4me activates gene expression by regulating transcription elongation and plays a role in telomere length maintenance. H3K4me enrichment correlates with transcription levels, and occurs in a 5' to 3' gradient with H3K4me3 enrichment at the 5'-end of genes, shifting to H3K4me2 and then H3K4me1. Methylated by SET2 to form H3K36me. H3K36me represses gene expression. Methylated by DOT1 to form H3K79me. H3K79me is required for association of SIR proteins with telomeric regions and for telomeric silencing. The COMPASS-mediated formation of H3K4me2/3 and the DOT1-mediated formation of H3K79me require H2BK123ub1. Post-translationally, acetylation of histone H3 leads to transcriptional activation. H3K14ac formation by GCN5 is promoted by H3S10ph. H3K14ac can also be formed by ESA1. H3K56ac formation occurs predominantly in newly synthesized H3 molecules during G1, S and G2/M of the cell cycle and may be involved in DNA repair.

Its subcellular location is the nucleus. The protein localises to the chromosome. In terms of biological role, core component of nucleosome. Nucleosomes wrap and compact DNA into chromatin, limiting DNA accessibility to the cellular machineries which require DNA as a template. Histones thereby play a central role in transcription regulation, DNA repair, DNA replication and chromosomal stability. DNA accessibility is regulated via a complex set of post-translational modifications of histones, also called histone code, and nucleosome remodeling. The protein is Histone H3 (HHT1) of Cryptococcus neoformans var. neoformans serotype D (strain B-3501A) (Filobasidiella neoformans).